The sequence spans 920 residues: Vacuolar membrane protease (920 aa).

The Cytoplasmic portion of the chain corresponds to 1–20 (MASSRAQRFNPIAFTPWPVT). A helical transmembrane segment spans residues 21 to 41 (CITTIVYLALLIPILVINLVV). Topologically, residues 42-378 (PSAPETNPKG…AFAVFRLHTL (337 aa)) are vacuolar. N-linked (GlcNAc...) asparagine glycans are attached at residues N53, N116, and N119. Residues H175 and D187 each contribute to the Zn(2+) site. E221 acts as the Proton acceptor in catalysis. E222 is a binding site for Zn(2+). N238 carries N-linked (GlcNAc...) asparagine glycosylation. E247 and H306 together coordinate Zn(2+). A helical membrane pass occupies residues 379–399 (FAISVALLVIAPLVIFITSVI). Residues 400–433 (LSKTDRMYLFSMSKSLEGTGDQVSLRGLRGFSRT) are Cytoplasmic-facing. A helical membrane pass occupies residues 434 to 454 (PIILVIATTIPICLAYLLEKV). Residues 455 to 463 (NPYIVHSSQ) lie on the Vacuolar side of the membrane. A helical membrane pass occupies residues 464-484 (FSVWSMMFSAWIFLAWFLACA). Residues 485–495 (ADFFRPSALHR) lie on the Cytoplasmic side of the membrane. The helical transmembrane segment at 496–516 (AYSYTWIFVATWIMLVINTVY) threads the bilayer. Topologically, residues 517–520 (ANQK) are vacuolar. The helical transmembrane segment at 521–541 (GIAAGYFLLFYFAGAFLATWI) threads the bilayer. At 542–659 (SYLELFALPR…TLPRWTWVLQ (118 aa)) the chain is on the cytoplasmic side. The tract at residues 556–605 (ARQTTGRRPSSLSSRLLTSSADELRSNASPSTAEFPGAAGEDTDPTESTS) is disordered. The span at 559–575 (TTGRRPSSLSSRLLTSS) shows a compositional bias: low complexity. The helical transmembrane segment at 660-680 (LLLLAPIVLILVGQLALFLTA) threads the bilayer. Over 681-693 (SMCQVGSDGVSTF) the chain is Vacuolar. Residues 694–714 (VVYLACAVFTTLLCIPLFPLI) traverse the membrane as a helical segment. Residues 715–720 (HRFTYH) lie on the Cytoplasmic side of the membrane. A helical membrane pass occupies residues 721 to 741 (IPTFLFLVFIGTLIYNLVAFP). Topologically, residues 742–920 (FSPANRLKTF…VEASHSFTIQ (179 aa)) are vacuolar. N-linked (GlcNAc...) asparagine glycans are attached at residues N760, N788, and N832.

Belongs to the peptidase M28 family. Requires Zn(2+) as cofactor.

The protein resides in the vacuole membrane. May be involved in vacuolar sorting and osmoregulation. This is Vacuolar membrane protease from Ajellomyces capsulatus (strain H143) (Darling's disease fungus).